The following is a 231-amino-acid chain: Flagellar L-ring protein (231 aa).

Positions 1–18 are cleaved as a signal peptide; the sequence is MKRFVSVVALSGVVSLAG. C19 carries N-palmitoyl cysteine lipidation. The S-diacylglycerol cysteine moiety is linked to residue C19.

It belongs to the FlgH family. The basal body constitutes a major portion of the flagellar organelle and consists of four rings (L,P,S, and M) mounted on a central rod.

It is found in the cell outer membrane. The protein localises to the bacterial flagellum basal body. Its function is as follows. Assembles around the rod to form the L-ring and probably protects the motor/basal body from shearing forces during rotation. The protein is Flagellar L-ring protein of Pseudomonas fluorescens (strain Pf0-1).